Reading from the N-terminus, the 26-residue chain is Acyl carrier protein (26 aa).

The Carrier domain maps to 2–26 (SDTATRVQKIVVEHLGVESDKVTQE).

It belongs to the acyl carrier protein (ACP) family. 4'-phosphopantetheine is transferred from CoA to a specific serine of apo-ACP by AcpS. This modification is essential for activity because fatty acids are bound in thioester linkage to the sulfhydryl of the prosthetic group.

It localises to the cytoplasm. It participates in lipid metabolism; fatty acid biosynthesis. Its function is as follows. Carrier of the growing fatty acid chain in fatty acid biosynthesis. This Erythrobacter longus protein is Acyl carrier protein (acpP).